Here is a 74-residue protein sequence, read N- to C-terminus: UPF0741 protein BcerKBAB4_5177 (74 aa).

The protein belongs to the UPF0741 family.

In Bacillus mycoides (strain KBAB4) (Bacillus weihenstephanensis), this protein is UPF0741 protein BcerKBAB4_5177.